The primary structure comprises 219 residues: Leucyl/phenylalanyl-tRNA--protein transferase (219 aa).

This sequence belongs to the L/F-transferase family.

It is found in the cytoplasm. The catalysed reaction is N-terminal L-lysyl-[protein] + L-leucyl-tRNA(Leu) = N-terminal L-leucyl-L-lysyl-[protein] + tRNA(Leu) + H(+). The enzyme catalyses N-terminal L-arginyl-[protein] + L-leucyl-tRNA(Leu) = N-terminal L-leucyl-L-arginyl-[protein] + tRNA(Leu) + H(+). It carries out the reaction L-phenylalanyl-tRNA(Phe) + an N-terminal L-alpha-aminoacyl-[protein] = an N-terminal L-phenylalanyl-L-alpha-aminoacyl-[protein] + tRNA(Phe). In terms of biological role, functions in the N-end rule pathway of protein degradation where it conjugates Leu, Phe and, less efficiently, Met from aminoacyl-tRNAs to the N-termini of proteins containing an N-terminal arginine or lysine. The polypeptide is Leucyl/phenylalanyl-tRNA--protein transferase (Leptospira borgpetersenii serovar Hardjo-bovis (strain JB197)).